A 173-amino-acid polypeptide reads, in one-letter code: Crossover junction endodeoxyribonuclease RuvC (173 aa).

Catalysis depends on residues Asp-8, Glu-67, and Asp-139. Mg(2+) contacts are provided by Asp-8, Glu-67, and Asp-139.

The protein belongs to the RuvC family. As to quaternary structure, homodimer which binds Holliday junction (HJ) DNA. The HJ becomes 2-fold symmetrical on binding to RuvC with unstacked arms; it has a different conformation from HJ DNA in complex with RuvA. In the full resolvosome a probable DNA-RuvA(4)-RuvB(12)-RuvC(2) complex forms which resolves the HJ. It depends on Mg(2+) as a cofactor.

The protein resides in the cytoplasm. It carries out the reaction Endonucleolytic cleavage at a junction such as a reciprocal single-stranded crossover between two homologous DNA duplexes (Holliday junction).. Its function is as follows. The RuvA-RuvB-RuvC complex processes Holliday junction (HJ) DNA during genetic recombination and DNA repair. Endonuclease that resolves HJ intermediates. Cleaves cruciform DNA by making single-stranded nicks across the HJ at symmetrical positions within the homologous arms, yielding a 5'-phosphate and a 3'-hydroxyl group; requires a central core of homology in the junction. The consensus cleavage sequence is 5'-(A/T)TT(C/G)-3'. Cleavage occurs on the 3'-side of the TT dinucleotide at the point of strand exchange. HJ branch migration catalyzed by RuvA-RuvB allows RuvC to scan DNA until it finds its consensus sequence, where it cleaves and resolves the cruciform DNA. This chain is Crossover junction endodeoxyribonuclease RuvC, found in Salmonella dublin (strain CT_02021853).